We begin with the raw amino-acid sequence, 418 residues long: Putative methylthiotransferase jhp_0270 (418 aa).

The 109-residue stretch at Lys-2–Arg-110 folds into the MTTase N-terminal domain. 6 residues coordinate [4Fe-4S] cluster: Cys-11, Cys-45, Cys-74, Cys-144, Cys-148, and Cys-151. The 226-residue stretch at Phe-130–Ala-355 folds into the Radical SAM core domain.

Belongs to the methylthiotransferase family. It depends on [4Fe-4S] cluster as a cofactor.

This Helicobacter pylori (strain J99 / ATCC 700824) (Campylobacter pylori J99) protein is Putative methylthiotransferase jhp_0270.